We begin with the raw amino-acid sequence, 193 residues long: Xanthine phosphoribosyltransferase (193 aa).

The xanthine site is built by L20 and T27. Residue 128–132 (ANGQA) participates in 5-phospho-alpha-D-ribose 1-diphosphate binding. K156 provides a ligand contact to xanthine.

The protein belongs to the purine/pyrimidine phosphoribosyltransferase family. Xpt subfamily. As to quaternary structure, homodimer.

It localises to the cytoplasm. It catalyses the reaction XMP + diphosphate = xanthine + 5-phospho-alpha-D-ribose 1-diphosphate. Its pathway is purine metabolism; XMP biosynthesis via salvage pathway; XMP from xanthine: step 1/1. Its function is as follows. Converts the preformed base xanthine, a product of nucleic acid breakdown, to xanthosine 5'-monophosphate (XMP), so it can be reused for RNA or DNA synthesis. The sequence is that of Xanthine phosphoribosyltransferase from Streptococcus equi subsp. equi (strain 4047).